Reading from the N-terminus, the 874-residue chain is Alanine--tRNA ligase (874 aa).

Zn(2+)-binding residues include histidine 564, histidine 568, cysteine 665, and histidine 669.

It belongs to the class-II aminoacyl-tRNA synthetase family. The cofactor is Zn(2+).

The protein localises to the cytoplasm. The catalysed reaction is tRNA(Ala) + L-alanine + ATP = L-alanyl-tRNA(Ala) + AMP + diphosphate. Functionally, catalyzes the attachment of alanine to tRNA(Ala) in a two-step reaction: alanine is first activated by ATP to form Ala-AMP and then transferred to the acceptor end of tRNA(Ala). Also edits incorrectly charged Ser-tRNA(Ala) and Gly-tRNA(Ala) via its editing domain. The chain is Alanine--tRNA ligase from Burkholderia pseudomallei (strain 1106a).